A 437-amino-acid polypeptide reads, in one-letter code: MTTFSPREIVSELDRFIVGQHDAKRAVAIALRNRWRRQQLTGPLREEVAPKNILMIGPTGCGKTEIARRLARLANAPFLKVEATKFTEVGYVGRDVEQIVRDLVEVAIGLTRQAKREGVKAKAEAAAENRILDALVGPTASQATRDSFRRKLRNSELDDKEVELELTSSAPAGMPMFEIPGVPGASMGAINIGDMLGKALGGQRGKPRRILVRDAYAPLMAEESDKLVDDEALVREAIREVENNGIVFLDEIDKICAREGRSSGDVSREGVQRDLLPLIEGTTVATKHGPVKTDHVLFIASGAFHVSKPADLLPELQGRLPIRVELQPLTVDDFKQILTATEASLLKQTVALMETEGVTLTFTDDAVDALARVAVEVNSSVENIGARRLQTVLERVIDEISFTATDRSGETVPIDAAYVRERVQDLASNADLSRFIL.

ATP contacts are provided by residues Val-18, 60–65 (GCGKTE), Asp-250, Glu-315, and Arg-387.

This sequence belongs to the ClpX chaperone family. HslU subfamily. As to quaternary structure, a double ring-shaped homohexamer of HslV is capped on each side by a ring-shaped HslU homohexamer. The assembly of the HslU/HslV complex is dependent on binding of ATP.

The protein resides in the cytoplasm. Its function is as follows. ATPase subunit of a proteasome-like degradation complex; this subunit has chaperone activity. The binding of ATP and its subsequent hydrolysis by HslU are essential for unfolding of protein substrates subsequently hydrolyzed by HslV. HslU recognizes the N-terminal part of its protein substrates and unfolds these before they are guided to HslV for hydrolysis. The polypeptide is ATP-dependent protease ATPase subunit HslU (Methylobacterium radiotolerans (strain ATCC 27329 / DSM 1819 / JCM 2831 / NBRC 15690 / NCIMB 10815 / 0-1)).